We begin with the raw amino-acid sequence, 715 residues long: Fatty acid oxidation complex subunit alpha (715 aa).

The segment at 1–189 (MIYQGETLSV…KVGAIDAVVA (189 aa)) is enoyl-CoA hydratase/isomerase. Asp-296 provides a ligand contact to substrate. The interval 311-715 (AKATRHAAVL…EMAAQGKTFY (405 aa)) is 3-hydroxyacyl-CoA dehydrogenase. Residues Met-325, Asp-344, 401–403 (VVE), Lys-408, and Ser-430 each bind NAD(+). His-451 (for 3-hydroxyacyl-CoA dehydrogenase activity) is an active-site residue. Residue Asn-454 participates in NAD(+) binding. The substrate site is built by Asn-501 and Tyr-661.

The protein in the N-terminal section; belongs to the enoyl-CoA hydratase/isomerase family. It in the C-terminal section; belongs to the 3-hydroxyacyl-CoA dehydrogenase family. In terms of assembly, heterotetramer of two alpha chains (FadB) and two beta chains (FadA).

It catalyses the reaction a (3S)-3-hydroxyacyl-CoA + NAD(+) = a 3-oxoacyl-CoA + NADH + H(+). It carries out the reaction a (3S)-3-hydroxyacyl-CoA = a (2E)-enoyl-CoA + H2O. The catalysed reaction is a 4-saturated-(3S)-3-hydroxyacyl-CoA = a (3E)-enoyl-CoA + H2O. The enzyme catalyses (3S)-3-hydroxybutanoyl-CoA = (3R)-3-hydroxybutanoyl-CoA. It catalyses the reaction a (3Z)-enoyl-CoA = a 4-saturated (2E)-enoyl-CoA. It carries out the reaction a (3E)-enoyl-CoA = a 4-saturated (2E)-enoyl-CoA. The protein operates within lipid metabolism; fatty acid beta-oxidation. Its function is as follows. Involved in the aerobic and anaerobic degradation of long-chain fatty acids via beta-oxidation cycle. Catalyzes the formation of 3-oxoacyl-CoA from enoyl-CoA via L-3-hydroxyacyl-CoA. It can also use D-3-hydroxyacyl-CoA and cis-3-enoyl-CoA as substrate. The polypeptide is Fatty acid oxidation complex subunit alpha (Aeromonas salmonicida (strain A449)).